We begin with the raw amino-acid sequence, 93 residues long: Acylphosphatase (93 aa).

An Acylphosphatase-like domain is found at 6-93 (RLVAWVRGQV…RGGYEGFAIR (88 aa)). Active-site residues include R21 and N40.

The protein belongs to the acylphosphatase family.

It catalyses the reaction an acyl phosphate + H2O = a carboxylate + phosphate + H(+). The sequence is that of Acylphosphatase (acyP) from Streptomyces coelicolor (strain ATCC BAA-471 / A3(2) / M145).